Consider the following 103-residue polypeptide: Cell division protein FtsB (103 aa).

Residues 1–3 (MGK) are Cytoplasmic-facing. The helical transmembrane segment at 4 to 21 (LTLLLLAILVWLQYSLWF) threads the bilayer. The Periplasmic segment spans residues 22–103 (GKNGIHDYTR…RAQSAGQNNR (82 aa)). The stretch at 31-71 (RVNNDVAAQQATNAKLKARNDQLFAEIDDLNGGQEALEERA) forms a coiled coil.

Belongs to the FtsB family. In terms of assembly, part of a complex composed of FtsB, FtsL and FtsQ.

The protein resides in the cell inner membrane. In terms of biological role, essential cell division protein. May link together the upstream cell division proteins, which are predominantly cytoplasmic, with the downstream cell division proteins, which are predominantly periplasmic. The sequence is that of Cell division protein FtsB from Escherichia coli O81 (strain ED1a).